Reading from the N-terminus, the 258-residue chain is MRRLCIILLVYVYATFATKGICKQDEDVRYMGIDVVVKVTKKTSGSDTVCQALRTTFEAAHKGDGANDSLSTEYVDDYSEEEEYEYDESFLEGFVIGSTYYTIVGGGLSVTFGFTGCPTVKSVSEYAKGRIVFIRLSSDAPWRDTNPMSINRTEALALLEKCETSIDIKCSNETVSETTYGLASLAPHITQATERGNIIGSTLVDTDCVENLDVTVHLGEMCRKTSDLSKRDSLKVKNGELLDDDTFSIHTPKLKACN.

The N-terminal stretch at 1 to 17 is a signal peptide; it reads MRRLCIILLVYVYATFA. N-linked (GlcNAc...) asparagine; by host glycans are attached at residues Asn67, Asn151, and Asn172.

It belongs to the poxviruses A41 family.

This chain is Protein T1, found in Rabbit fibroma virus (strain Kasza) (RFV).